Here is a 297-residue protein sequence, read N- to C-terminus: MPELPEVETVRRGLEPALVGARFTTVHLARPDLRFPLPARFAARLTGQRVEALSRRAKYLVADLSSGDALIMHLGMSGRFDVVFPDGRQLSPGEFYLEGAPGQAKHDHVVFALSNGARVTYNDVRRFGFMDLVRRAELETCRHFAGMGIEPLGSDLSGEAVARLFRGRRTPLKAALLDQRLIAGLGNIYVCEALHRARLHPEAAAGTLADAAGRPTRAAARLAQVIRDVLTEAVAAGGSTLRDYAHTDGTQGAFQHRFRVYDREGLACTARGCRGRVRRIVQAGRSTFYCETCQPAP.

The Schiff-base intermediate with DNA role is filled by Pro2. Catalysis depends on Glu3, which acts as the Proton donor. Catalysis depends on Lys58, which acts as the Proton donor; for beta-elimination activity. Residues His106, Arg125, and Arg168 each coordinate DNA. The segment at 259-295 (RVYDREGLACTARGCRGRVRRIVQAGRSTFYCETCQP) adopts an FPG-type zinc-finger fold. The Proton donor; for delta-elimination activity role is filled by Arg285.

It belongs to the FPG family. As to quaternary structure, monomer. Requires Zn(2+) as cofactor.

It carries out the reaction Hydrolysis of DNA containing ring-opened 7-methylguanine residues, releasing 2,6-diamino-4-hydroxy-5-(N-methyl)formamidopyrimidine.. It catalyses the reaction 2'-deoxyribonucleotide-(2'-deoxyribose 5'-phosphate)-2'-deoxyribonucleotide-DNA = a 3'-end 2'-deoxyribonucleotide-(2,3-dehydro-2,3-deoxyribose 5'-phosphate)-DNA + a 5'-end 5'-phospho-2'-deoxyribonucleoside-DNA + H(+). Functionally, involved in base excision repair of DNA damaged by oxidation or by mutagenic agents. Acts as a DNA glycosylase that recognizes and removes damaged bases. Has a preference for oxidized purines, such as 7,8-dihydro-8-oxoguanine (8-oxoG). Has AP (apurinic/apyrimidinic) lyase activity and introduces nicks in the DNA strand. Cleaves the DNA backbone by beta-delta elimination to generate a single-strand break at the site of the removed base with both 3'- and 5'-phosphates. This Methylobacterium sp. (strain 4-46) protein is Formamidopyrimidine-DNA glycosylase.